The sequence spans 465 residues: ATP synthase subunit beta (465 aa).

Position 148–155 (148–155) interacts with ATP; the sequence is GGAGVGKT.

Belongs to the ATPase alpha/beta chains family. F-type ATPases have 2 components, CF(1) - the catalytic core - and CF(0) - the membrane proton channel. CF(1) has five subunits: alpha(3), beta(3), gamma(1), delta(1), epsilon(1). CF(0) has three main subunits: a(1), b(2) and c(9-12). The alpha and beta chains form an alternating ring which encloses part of the gamma chain. CF(1) is attached to CF(0) by a central stalk formed by the gamma and epsilon chains, while a peripheral stalk is formed by the delta and b chains.

The protein resides in the cell inner membrane. It catalyses the reaction ATP + H2O + 4 H(+)(in) = ADP + phosphate + 5 H(+)(out). Functionally, produces ATP from ADP in the presence of a proton gradient across the membrane. The catalytic sites are hosted primarily by the beta subunits. The protein is ATP synthase subunit beta of Neisseria meningitidis serogroup B (strain ATCC BAA-335 / MC58).